The chain runs to 111 residues: Probable 4-amino-4-deoxy-L-arabinose-phosphoundecaprenol flippase subunit ArnE (111 aa).

The Cytoplasmic segment spans residues 1 to 37 (MIWLVLILASLLSVTGQLCQKQATRPVAINKRRKHIA). Residues 38 to 58 (LWLGLGLVCLGLAMVLWLLVL) traverse the membrane as a helical segment. One can recognise an EamA domain in the interval 40-109 (LGLGLVCLGL…IIGGIVILGS (70 aa)). At 59 to 60 (QT) the chain is on the periplasmic side. A helical membrane pass occupies residues 61–81 (VPVGIAYPMLSLNFVWVTLAA). At 82 to 87 (TKLWHE) the chain is on the cytoplasmic side. The chain crosses the membrane as a helical span at residues 88 to 108 (PVSFRHWCGVAFIIGGIVILG). The Periplasmic segment spans residues 109-111 (STV).

It belongs to the ArnE family. As to quaternary structure, heterodimer of ArnE and ArnF.

Its subcellular location is the cell inner membrane. Its pathway is bacterial outer membrane biogenesis; lipopolysaccharide biosynthesis. Functionally, translocates 4-amino-4-deoxy-L-arabinose-phosphoundecaprenol (alpha-L-Ara4N-phosphoundecaprenol) from the cytoplasmic to the periplasmic side of the inner membrane. The protein is Probable 4-amino-4-deoxy-L-arabinose-phosphoundecaprenol flippase subunit ArnE of Escherichia fergusonii (strain ATCC 35469 / DSM 13698 / CCUG 18766 / IAM 14443 / JCM 21226 / LMG 7866 / NBRC 102419 / NCTC 12128 / CDC 0568-73).